We begin with the raw amino-acid sequence, 89 residues long: Signal recognition particle 19 kDa protein (89 aa).

Belongs to the SRP19 family. As to quaternary structure, part of the signal recognition particle protein translocation system, which is composed of SRP and FtsY. Archaeal SRP consists of a 7S RNA molecule of 300 nucleotides and two protein subunits: SRP54 and SRP19.

It is found in the cytoplasm. Involved in targeting and insertion of nascent membrane proteins into the cytoplasmic membrane. Binds directly to 7S RNA and mediates binding of the 54 kDa subunit of the SRP. The polypeptide is Signal recognition particle 19 kDa protein (Methanococcus maripaludis (strain C7 / ATCC BAA-1331)).